Consider the following 258-residue polypeptide: Global transcriptional regulator CodY (258 aa).

The interval 1–156 (MSSLLDKTRM…SATIIGLEIL (156 aa)) is GAF domain. Residues 204–223 (ASKIADKVGITRSVIVNALR) constitute a DNA-binding region (H-T-H motif).

It belongs to the CodY family.

Its subcellular location is the cytoplasm. DNA-binding global transcriptional regulator which is involved in the adaptive response to starvation and acts by directly or indirectly controlling the expression of numerous genes in response to nutrient availability. During rapid exponential growth, CodY is highly active and represses genes whose products allow adaptation to nutrient depletion. The chain is Global transcriptional regulator CodY from Clostridium botulinum (strain ATCC 19397 / Type A).